Here is a 74-residue protein sequence, read N- to C-terminus: Translation initiation factor IF-1 (74 aa).

Residues 1-72 enclose the S1-like domain; that stretch reads MAKQDAIEME…TKGRITYRLR (72 aa).

Belongs to the IF-1 family. As to quaternary structure, component of the 30S ribosomal translation pre-initiation complex which assembles on the 30S ribosome in the order IF-2 and IF-3, IF-1 and N-formylmethionyl-tRNA(fMet); mRNA recruitment can occur at any time during PIC assembly.

It is found in the cytoplasm. In terms of biological role, one of the essential components for the initiation of protein synthesis. Stabilizes the binding of IF-2 and IF-3 on the 30S subunit to which N-formylmethionyl-tRNA(fMet) subsequently binds. Helps modulate mRNA selection, yielding the 30S pre-initiation complex (PIC). Upon addition of the 50S ribosomal subunit IF-1, IF-2 and IF-3 are released leaving the mature 70S translation initiation complex. This Acaryochloris marina (strain MBIC 11017) protein is Translation initiation factor IF-1.